The chain runs to 285 residues: D-apionate oxidoisomerase (285 aa).

NAD(+) is bound by residues 15–17 (GKM), Glu36, and Asp71. His116 and Glu186 together coordinate Zn(2+).

This sequence belongs to the ApnO family. It depends on Zn(2+) as a cofactor.

It catalyses the reaction D-apionate + NAD(+) = 3-oxoisoapionate + NADH + H(+). It participates in carbohydrate metabolism. In terms of biological role, involved in catabolism of D-apiose. Catalyzes the conversion of D-apionate to 3-oxo-isoapionate. The sequence is that of D-apionate oxidoisomerase from Pectobacterium atrosepticum (strain SCRI 1043 / ATCC BAA-672) (Erwinia carotovora subsp. atroseptica).